A 224-amino-acid polypeptide reads, in one-letter code: Ribose-5-phosphate isomerase A (224 aa).

Residues 32-35 (TGST), 85-88 (DGAD), and 98-101 (KGGG) contribute to the substrate site. Glu107 functions as the Proton acceptor in the catalytic mechanism. Lys125 serves as a coordination point for substrate.

This sequence belongs to the ribose 5-phosphate isomerase family. Homodimer.

It catalyses the reaction aldehydo-D-ribose 5-phosphate = D-ribulose 5-phosphate. It functions in the pathway carbohydrate degradation; pentose phosphate pathway; D-ribose 5-phosphate from D-ribulose 5-phosphate (non-oxidative stage): step 1/1. Its function is as follows. Catalyzes the reversible conversion of ribose-5-phosphate to ribulose 5-phosphate. In Pseudomonas putida (strain GB-1), this protein is Ribose-5-phosphate isomerase A.